The primary structure comprises 409 residues: Chaetoglobosin A biosynthesis cluster protein C (409 aa).

Residues 51-120 enclose the HTH CENPB-type domain; the sequence is DLPANSRKLT…VKRQPQLRTR (70 aa). Positions 84 to 113 form a DNA-binding region, H-T-H motif; the sequence is RGVEDMANHLLRERDAPPVGKLWAHNFVKR. Disordered regions lie at residues 243–269 and 320–350; these read PTHP…ETRS and ANEP…QDPL. Polar residues predominate over residues 255 to 269; the sequence is PWASKTPYNAQETRS.

The protein localises to the nucleus. Part of the gene cluster that mediates the biosynthesis of chaetoglobosin A which has a unique inhibitory activity against actin polymerization in mammalian cells. Chaetoglobosin A and its intermediates are involved in the morphological differentiation of C.globosum. The first step of the pathway is the synthesis of prochaetoglobosin I via condensation of one acetyl-CoA, 8 malonyl-CoA, and a L-tryptophan molecule by the PKS-NRPS hybrid synthetase cheA, followed by reduction of backbone double bond to install desired geometry by the enoyl reductase cheB. Further multiple oxidation steps performed by the cytochrome P450 monooxygenases cheE and cheG, as well as by the FAD-linked oxidoreductase cheF, lead to the formation of chaetoglobosin A. Depending on the order of action of these reductases, distinct intermediates can be identified. Within the pathway, the cytochrome P450 monooxygenase cheE catalyzes a stereospecific epoxidation on prochaetoglobosin I, cytoglobosin D, and chaetoglobosin J intermediates. The FAD-linked oxidoreductase cheF performs dehydrogenation of the C-20 hydroxyl groups in the 20-dihyrochaetoglobosin A and cytoglobosin D intermediates. Finally, the cytochrome P450 monooxygenase cheG can catalyze the stereospecific dihydroxylation of prochaetoglobosin I and prochaetoglobosin IV at C-19 and C-20, respectively. The Diels-Alderase cheD may play a role in the post-PKS-NRPS biosynthetic steps catalyzing Diels-Alder cyclization. The sequence is that of Chaetoglobosin A biosynthesis cluster protein C from Chaetomium globosum (strain ATCC 6205 / CBS 148.51 / DSM 1962 / NBRC 6347 / NRRL 1970) (Soil fungus).